Reading from the N-terminus, the 191-residue chain is MAAYSYRPGPGAGPGPAAGAALPDQSFLWNVFQRVDKDRSGVISDNELQQALSNGTWTPFNPVTVRSIISMFDRENKAGVNFSEFTGVWKYITDWQNVFRTYDRDNSGMIDKHELKQALSGFGYRLSDQFHDILIRKFDRQGRGQIAFDDFIQGCIVLQRLTDIFRRYDTDQDGWIQVSYEQYLSMVFSIV.

An N-acetylalanine modification is found at Ala-2. EF-hand domains lie at 23 to 58 (PDQS…GTWT), 59 to 89 (PFNP…TGVW), 90 to 125 (KYIT…FGYR), 126 to 161 (LSDQ…LQRL), and 162 to 191 (TDIF…FSIV). Residues Asp-36, Asp-38, Ser-40, Val-42, and Glu-47 each coordinate Ca(2+). Ca(2+)-binding residues include Asp-103, Asp-105, Ser-107, Met-109, and Glu-114. Asp-169, Asp-171, Asp-173, and Trp-175 together coordinate Mg(2+).

In terms of assembly, homodimer and heterodimer; heterodimerizes (via the EF-hand 5) with PEF1. Isoform 1 and isoform 2 self-associate; probably forming homodimers. Interacts with CPNE4 (via VWFA domain). Interacts with PDCD6IP; the interaction is calcium-dependent. Interacts with RBM22. Interacts with PLSCR4. Interacts with ANXA7 and TSG101. Interacts with DAPK1. Interacts with SEC31A; the interaction is calcium-dependent and promotes monoubiquitination of SEC31A. Interacts with ANXA11 (via N-terminus); the interaction is calcium-dependent. Interacts with PLSCR3 (via N-terminus); the interaction is calcium-dependent. Interacts with MCOLN1; the interaction is calcium-dependent. Interacts with KDR; the interaction is calcium-dependent. Interacts with HEBP2; the interaction is calcium-dependent. Interacts with TFG. Isoform 1: Interacts with SHISA5, leading to stabilize it. Isoform 2: Does not interact with SHISA5. Isoform 2: Does not interact with PDCD6IP, TSG101, ANXA7 and ANXA11.

It is found in the endoplasmic reticulum membrane. The protein localises to the cytoplasmic vesicle. Its subcellular location is the COPII-coated vesicle membrane. The protein resides in the cytoplasm. It localises to the nucleus. It is found in the endosome. Its function is as follows. Calcium sensor that plays a key role in processes such as endoplasmic reticulum (ER)-Golgi vesicular transport, endosomal biogenesis or membrane repair. Acts as an adapter that bridges unrelated proteins or stabilizes weak protein-protein complexes in response to calcium: calcium-binding triggers exposure of apolar surface, promoting interaction with different sets of proteins thanks to 3 different hydrophobic pockets, leading to translocation to membranes. Involved in ER-Golgi transport. Regulates ER-Golgi transport by promoting the association between PDCD6IP and TSG101, thereby bridging together the ESCRT-III and ESCRT-I complexes. Together with PEF1, acts as a calcium-dependent adapter for the BCR(KLHL12) complex, a complex involved in ER-Golgi transport by regulating the size of COPII coats. In response to cytosolic calcium increase, the heterodimer formed with PEF1 interacts with, and bridges together the BCR(KLHL12) complex and SEC31 (SEC31A or SEC31B), promoting monoubiquitination of SEC31 and subsequent collagen export, which is required for neural crest specification. Involved in the regulation of the distribution and function of MCOLN1 in the endosomal pathway. Promotes localization and polymerization of TFG at endoplasmic reticulum exit site. Required for T-cell receptor-, Fas-, and glucocorticoid-induced apoptosis. May mediate Ca(2+)-regulated signals along the death pathway: interaction with DAPK1 can accelerate apoptotic cell death by increasing caspase-3 activity. Its role in apoptosis may however be indirect, as suggested by knockout experiments. May inhibit KDR/VEGFR2-dependent angiogenesis; the function involves inhibition of VEGF-induced phosphorylation of the Akt signaling pathway. Functionally, has a lower Ca(2+) affinity than isoform 1. The protein is Programmed cell death protein 6 of Rattus norvegicus (Rat).